Consider the following 681-residue polypeptide: UvrABC system protein C (681 aa).

One can recognise a GIY-YIG domain in the interval 16–95 (DSPGVYKFRD…IKEYDPRFNV (80 aa)). Positions 208-243 (GTYIRRLERQMTDAAEEMEYEKAARLRDDIGALKKA) constitute a UVR domain. Positions 650–681 (EIMEDEEPGTTAGSSQEPVSAGTSDERRGQET) are disordered. Residues 660-672 (TAGSSQEPVSAGT) are compositionally biased toward polar residues.

The protein belongs to the UvrC family. In terms of assembly, interacts with UvrB in an incision complex.

The protein localises to the cytoplasm. The UvrABC repair system catalyzes the recognition and processing of DNA lesions. UvrC both incises the 5' and 3' sides of the lesion. The N-terminal half is responsible for the 3' incision and the C-terminal half is responsible for the 5' incision. The chain is UvrABC system protein C from Streptomyces avermitilis (strain ATCC 31267 / DSM 46492 / JCM 5070 / NBRC 14893 / NCIMB 12804 / NRRL 8165 / MA-4680).